Reading from the N-terminus, the 292-residue chain is MKRIFLFIVTNLAILVMLSITLRLLGVDRILDAEGSGLNFNALLVLSAVIGFGGSLISLAMSKWSAKHMTGATVIEIPSNSTEGWLVETVRRQAKAAGVGMPEVAIYDSPDINAFATGMNRNNALVAVSSGLLQKMSRDEAEAVLAHEVSHIANGDMVTLALIQGVVNTFVIFLSRIIGHVIDRAVFRTEEGHGPAYFVTSLVAQLVLGILATIIVMWFSRQREFRADAGSAQLSGRNKMVAALRRLQQEYEPSHLPDKIAAFGISGQKSQIGRLFMSHPPLEERIQALQSA.

Helical transmembrane passes span 4–24 (IFLF…TLRL) and 42–62 (ALLV…LAMS). Position 147 (His147) interacts with Zn(2+). Glu148 is an active-site residue. His151 is a binding site for Zn(2+). The next 2 membrane-spanning stretches (helical) occupy residues 158 to 178 (VTLA…SRII) and 198 to 218 (FVTS…IVMW). Glu224 lines the Zn(2+) pocket.

This sequence belongs to the peptidase M48B family. It depends on Zn(2+) as a cofactor.

The protein localises to the cell inner membrane. The sequence is that of Protease HtpX homolog from Nitrosomonas eutropha (strain DSM 101675 / C91 / Nm57).